We begin with the raw amino-acid sequence, 399 residues long: Enolase (399 aa).

Gln-152 serves as a coordination point for (2R)-2-phosphoglycerate. Glu-194 functions as the Proton donor in the catalytic mechanism. Asp-230, Glu-273, and Asp-301 together coordinate Mg(2+). (2R)-2-phosphoglycerate is bound by residues Lys-326, Arg-355, Ser-356, and Lys-377. Lys-326 (proton acceptor) is an active-site residue.

The protein belongs to the enolase family. Mg(2+) serves as cofactor.

The protein resides in the cytoplasm. It is found in the secreted. It localises to the cell surface. It catalyses the reaction (2R)-2-phosphoglycerate = phosphoenolpyruvate + H2O. The protein operates within carbohydrate degradation; glycolysis; pyruvate from D-glyceraldehyde 3-phosphate: step 4/5. Functionally, catalyzes the reversible conversion of 2-phosphoglycerate (2-PG) into phosphoenolpyruvate (PEP). It is essential for the degradation of carbohydrates via glycolysis. In Methanocorpusculum labreanum (strain ATCC 43576 / DSM 4855 / Z), this protein is Enolase.